The chain runs to 96 residues: Aspartyl/glutamyl-tRNA(Asn/Gln) amidotransferase subunit C (96 aa).

It belongs to the GatC family. In terms of assembly, heterotrimer of A, B and C subunits.

It carries out the reaction L-glutamyl-tRNA(Gln) + L-glutamine + ATP + H2O = L-glutaminyl-tRNA(Gln) + L-glutamate + ADP + phosphate + H(+). The enzyme catalyses L-aspartyl-tRNA(Asn) + L-glutamine + ATP + H2O = L-asparaginyl-tRNA(Asn) + L-glutamate + ADP + phosphate + 2 H(+). Functionally, allows the formation of correctly charged Asn-tRNA(Asn) or Gln-tRNA(Gln) through the transamidation of misacylated Asp-tRNA(Asn) or Glu-tRNA(Gln) in organisms which lack either or both of asparaginyl-tRNA or glutaminyl-tRNA synthetases. The reaction takes place in the presence of glutamine and ATP through an activated phospho-Asp-tRNA(Asn) or phospho-Glu-tRNA(Gln). This is Aspartyl/glutamyl-tRNA(Asn/Gln) amidotransferase subunit C from Acaryochloris marina (strain MBIC 11017).